Here is a 598-residue protein sequence, read N- to C-terminus: MFKISRKNYSDLYGITTGDSVRLGDTNLWVKVEKDLTTYGEESVFGGGKTLREGMGMNSTMKLDDKLGNAEVMDLVITNALIVDYTGIYKADIGIKNGKIAAIGKSGNPHLTDNVDMIVGISTEISAGEGKIYTAGGLDTHVHWLEPEIVPVALDGGITTVIAGGTGMNDGTKATTVSPGKFWVKSALQAADGLSINAGFLAKGQGMEDPIFEQIAAGACGLKIHEDWGATGNAIDLALTVADKTDVAVAIHTDTLNEAGFVEHTIAAMKGRTIHAYHTEGAGGGHAPDILETVKYAHILPASTNPTIPYTVNTIAEHLDMLMVCHHLNPKVPEDVAFADSRIRSQTIAAEDLLHDMGAISIMSSDTLAMGRIGEVATRTWQMAHKMKAQFGSLKGDSEFSDNNRVKRYISKYTINPAIAHGVDSYIGSLEVGKLADIVAWEPKFFGAKPYYVVKMGVIARCVAGDPNASIPTCEPVIMRDQFGTYGRLLTNTSVSFVSKIGLENGIKEEYKLEKELLPVKNCRSVNKKSMKWNSATPNLEVDPQTFDAAVDFNDLENWLEQSASELAKKLKKTSSGKYILDAEPLTEAPLAQRYFLF.

Ni(2+) is bound by residues His141, His143, and Lys223. Lys223 bears the N6-carboxylysine mark. His225 contacts substrate. His252 and His278 together coordinate Ni(2+). His326 serves as the catalytic Proton donor. Position 366 (Asp366) interacts with Ni(2+).

Belongs to the metallo-dependent hydrolases superfamily. Urease alpha subunit family. Heterotrimer of UreA (gamma), UreB (beta) and UreC (alpha) subunits. Three heterotrimers associate to form the active enzyme. The cofactor is Ni cation. Carboxylation allows a single lysine to coordinate two nickel ions.

Its subcellular location is the cytoplasm. It carries out the reaction urea + 2 H2O + H(+) = hydrogencarbonate + 2 NH4(+). The protein operates within nitrogen metabolism; urea degradation; CO(2) and NH(3) from urea (urease route): step 1/1. This chain is Urease subunit alpha, found in Ureaplasma parvum serovar 3 (strain ATCC 27815 / 27 / NCTC 11736).